Consider the following 241-residue polypeptide: Octanoyltransferase (241 aa).

One can recognise a BPL/LPL catalytic domain in the interval 50–238; that stretch reads KIAHEQVWLL…AFEQIFGPTI (189 aa). Residues 89-96, 169-171, and 182-184 contribute to the substrate site; these read RGGEFTYH, AIG, and GIS. Cys200 acts as the Acyl-thioester intermediate in catalysis.

It belongs to the LipB family.

Its subcellular location is the cytoplasm. It carries out the reaction octanoyl-[ACP] + L-lysyl-[protein] = N(6)-octanoyl-L-lysyl-[protein] + holo-[ACP] + H(+). Its pathway is protein modification; protein lipoylation via endogenous pathway; protein N(6)-(lipoyl)lysine from octanoyl-[acyl-carrier-protein]: step 1/2. Functionally, catalyzes the transfer of endogenously produced octanoic acid from octanoyl-acyl-carrier-protein onto the lipoyl domains of lipoate-dependent enzymes. Lipoyl-ACP can also act as a substrate although octanoyl-ACP is likely to be the physiological substrate. The protein is Octanoyltransferase of Bartonella bacilliformis (strain ATCC 35685 / KC583 / Herrer 020/F12,63).